The chain runs to 375 residues: Lipid droplet hydrolase 1 (375 aa).

An AB hydrolase-1 domain is found at 88–358 (VFVFVPGLAG…CSHNLCFDRP (271 aa)). Ser-177 acts as the Charge relay system in catalysis. The Microbody targeting signal signature appears at 373-375 (SKL).

This sequence belongs to the AB hydrolase superfamily. Lipase family.

It localises to the lipid droplet. The enzyme catalyses a triacylglycerol + H2O = a diacylglycerol + a fatty acid + H(+). Functionally, serine hydrolase required for the maintenance of steady state level of non-polar and polar lipids of lipid droplets and thus plays a role in maintaining the lipids homeostasis. Exhibits both esterase and triacylglycerol lipase activity. The chain is Lipid droplet hydrolase 1 from Saccharomyces cerevisiae (strain ATCC 204508 / S288c) (Baker's yeast).